The chain runs to 479 residues: Transcription factor CP2-like protein 1 (479 aa).

One can recognise a Grh/CP2 DB domain in the interval 43–280 (RLPPLQYVLC…PSPSYNGSPN (238 aa)). Disordered regions lie at residues 219-245 (KPKGADRKQKTDREKMEKRTAQEKEKY) and 271-301 (PSPSYNGSPNSFGLGEGNASPTHPVEALPVG). Residues 221–245 (KGADRKQKTDREKMEKRTAQEKEKY) show a composition bias toward basic and acidic residues. The interval 261 to 365 (PDVAYQVNSA…IRLFNAIKGR (105 aa)) is SAM2-like domain. The span at 271-281 (PSPSYNGSPNS) shows a compositional bias: polar residues.

Belongs to the grh/CP2 family. CP2 subfamily. As to quaternary structure, forms homohexamers via its SAM-like domain. Interacts with MTA1; which is indispensable for TFCP2l1-mediated self-renewal-promoting effect and endoderm-inhibiting action. As to expression, highly expressed in placental JEG-3 cells and very low levels of expression in non-steroidogenic cells. No expression was seen in adrenal NCI-H295A cells or in adrenal tissue.

The protein localises to the nucleus. Functionally, transcription factor that facilitates establishment and maintenance of pluripotency in embryonic stem cells (ESCs). With KLF2, acts as the major effector of self-renewal that mediates induction of pluripotency downstream of LIF/STAT3 and Wnt/beta-catenin signaling. Required for normal duct development in the salivary gland and kidney. Coordinates the development of the kidney collecting ducts intercalated (IC) and principal (PC) cells, which regulate acid-base and salt-water homeostasis, respectively. Regulates the expression of IC genes including subunits B1 and D2 of the V-ATPase complex, OXGR1, CA12, SLC4A1, AQP6 and IC-specific transcription factor FOXI1. Also regulates the expression of JAG1 and subsequent notch signaling in the collecting duct. JAG1 initiates notch signaling in PCs but inhibits notch signaling in ICs. Acts as a transcriptional suppressor that may suppress UBP1-mediated transcriptional activation. Modulates the placental expression of CYP11A1. This is Transcription factor CP2-like protein 1 (TFCP2L1) from Homo sapiens (Human).